The chain runs to 312 residues: tRNA dimethylallyltransferase (312 aa).

An ATP-binding site is contributed by 15–22 (GPTAAGKS). A substrate-binding site is contributed by 17–22 (TAAGKS). The interval 40-43 (DSMQ) is interaction with substrate tRNA.

The protein belongs to the IPP transferase family. In terms of assembly, monomer. Mg(2+) is required as a cofactor.

The catalysed reaction is adenosine(37) in tRNA + dimethylallyl diphosphate = N(6)-dimethylallyladenosine(37) in tRNA + diphosphate. In terms of biological role, catalyzes the transfer of a dimethylallyl group onto the adenine at position 37 in tRNAs that read codons beginning with uridine, leading to the formation of N6-(dimethylallyl)adenosine (i(6)A). The chain is tRNA dimethylallyltransferase from Streptomyces coelicolor (strain ATCC BAA-471 / A3(2) / M145).